Reading from the N-terminus, the 366-residue chain is Beta sliding clamp (366 aa).

Belongs to the beta sliding clamp family. In terms of assembly, forms a ring-shaped head-to-tail homodimer around DNA which binds and tethers DNA polymerases and other proteins to the DNA. The DNA replisome complex has a single clamp-loading complex (3 tau and 1 each of delta, delta', psi and chi subunits) which binds 3 Pol III cores (1 core on the leading strand and 2 on the lagging strand) each with a beta sliding clamp dimer. Additional proteins in the replisome are other copies of gamma, psi and chi, Ssb, DNA helicase and RNA primase.

Its subcellular location is the cytoplasm. In terms of biological role, confers DNA tethering and processivity to DNA polymerases and other proteins. Acts as a clamp, forming a ring around DNA (a reaction catalyzed by the clamp-loading complex) which diffuses in an ATP-independent manner freely and bidirectionally along dsDNA. Initially characterized for its ability to contact the catalytic subunit of DNA polymerase III (Pol III), a complex, multichain enzyme responsible for most of the replicative synthesis in bacteria; Pol III exhibits 3'-5' exonuclease proofreading activity. The beta chain is required for initiation of replication as well as for processivity of DNA replication. In Haemophilus influenzae (strain ATCC 51907 / DSM 11121 / KW20 / Rd), this protein is Beta sliding clamp (dnaN).